The chain runs to 355 residues: MDDNKKRALAAALGQIERQFGKGAVMRMGDHERQAIPAISTGSLGLDIALGIGGLPKGRIVEIYGPESSGKTTLTLSVIAEAQKNGATCAFVDAEHALDPEYAGKLGVNVDDLLVSQPDTGEQALEITDMLVRSNAVDVIIVDSVAALVPKAEIEGEMGDMHVGLQARLMSQALRKITGNIKNANCLVIFINQIRMKIGVMFGSPETTTGGNALKFYASVRLDIRRTGAVKEGDEVVGSETRVKIVKNKVSPPFRQAEFQILYGKGIYRNGEIIDLGVAQGLVEKSGAWYSYQGNKIGQGKANAAKYLQENPAIGAEIEKQIREKLLTAGAVAAAAKAAAAEADADDMADADAGY.

65-72 (GPESSGKT) contacts ATP.

This sequence belongs to the RecA family.

It is found in the cytoplasm. Functionally, can catalyze the hydrolysis of ATP in the presence of single-stranded DNA, the ATP-dependent uptake of single-stranded DNA by duplex DNA, and the ATP-dependent hybridization of homologous single-stranded DNAs. It interacts with LexA causing its activation and leading to its autocatalytic cleavage. In Pseudomonas entomophila (strain L48), this protein is Protein RecA.